The primary structure comprises 330 residues: D-lactate dehydrogenase (330 aa).

NAD(+) is bound by residues 156-157 (RI), D176, 206-207 (VP), 233-235 (AAR), and D259. Residue R235 is part of the active site. Residue E264 is part of the active site. H296 (proton donor) is an active-site residue.

Belongs to the D-isomer specific 2-hydroxyacid dehydrogenase family.

The catalysed reaction is (R)-lactate + NAD(+) = pyruvate + NADH + H(+). This Staphylococcus aureus (strain MRSA252) protein is D-lactate dehydrogenase (ldhD).